A 1045-amino-acid polypeptide reads, in one-letter code: Septation initiation network scaffold protein cdc11 (1045 aa).

Positions 1–11 (MEQLWLEHDLS) are enriched in basic and acidic residues. 2 disordered regions span residues 1–269 (MEQL…NTKD) and 282–329 (RGRM…PSLS). A compositionally biased stretch (polar residues) spans 18-39 (PQEQGSDNSSEPPTTSNVNNTQ). Low complexity-rich tracts occupy residues 40-52 (STGR…STEH), 96-132 (KQSP…NVSN), and 152-165 (ISSS…SEGS). A compositionally biased stretch (polar residues) spans 166 to 176 (LKSQQSNTRSN). Positions 187–201 (ASNASSSSSVVSSPS) are enriched in low complexity. Composition is skewed to polar residues over residues 226-238 (NQLT…NSFE) and 320-329 (DSSNAFPSLS). S360 is modified (phosphoserine). Residues 377 to 417 (DVGSSQSSSKTARLNSSPKSTLKTSSVKTRRSHSAQSSRKV) are disordered. Over residues 379 to 403 (GSSQSSSKTARLNSSPKSTLKTSSV) the composition is skewed to polar residues. S558 carries the phosphoserine modification. 15 LRR repeats span residues 604–625 (RIIQ…SELC), 627–646 (SIEE…GCPV), 647–668 (TIRD…SNLL), 669–690 (NLQY…SSLI), 691–712 (HLRE…QHLD), 713–734 (GLLK…NSNL), 736–757 (RLEE…SSLQ), 758–779 (NLMV…QPMI), 780–801 (HLRI…QFPH), 802–822 (LRTL…RRLK), 846–867 (DIRN…HMFL), 868–889 (GVRY…IATS), 892–913 (NLRV…KPLQ), 914–935 (MIHR…CDIL), and 940–962 (QLNV…IDDS). The 39-residue stretch at 1005–1043 (AWRTRRKMYAEAILLACPHLEWLDGSDVSQSSRAAFTKS) folds into the LRRCT domain.

In terms of assembly, interacts with sid4. When hyperphosphorylated, interacts with byr4. Also interacts with spg1, sid2, cdc13 and cdc16. In terms of processing, phosphorylated by cdc7 and cdk1. Hyperphosphorylated during anaphase. Dephosphorylated by par1.

It localises to the cytoplasm. The protein localises to the cytoskeleton. The protein resides in the microtubule organizing center. Its subcellular location is the spindle pole body. Its function is as follows. Essential for the onset of septum formation. Involved in the organization of astral microtubules during mitosis. Acts as a bridge between sid4 and the other SIN proteins mediating their association with the spindle pole body (SPB). The sid4-cdc11 complex organizes a signaling hub on the SPB which coordinates cell and nuclear division. The sequence is that of Septation initiation network scaffold protein cdc11 (cdc11) from Schizosaccharomyces pombe (strain 972 / ATCC 24843) (Fission yeast).